The sequence spans 112 residues: Protein FAM32A (112 aa).

The segment at 23–58 (TKRKKKKKDKDKAKLLEAMGTSKKNEEEKRRGLDKR) is disordered. Positions 45–58 (KKNEEEKRRGLDKR) are enriched in basic and acidic residues.

This sequence belongs to the FAM32 family.

It is found in the nucleus. Its function is as follows. May induce G2 arrest and apoptosis. May also increase cell sensitivity to apoptotic stimuli. This Bos taurus (Bovine) protein is Protein FAM32A (FAM32A).